Here is a 158-residue protein sequence, read N- to C-terminus: 6,7-dimethyl-8-ribityllumazine synthase (158 aa).

5-amino-6-(D-ribitylamino)uracil-binding positions include F22, 57 to 59 (AVE), and 81 to 83 (AVI). 86–87 (GT) contributes to the (2S)-2-hydroxy-3-oxobutyl phosphate binding site. Residue H89 is the Proton donor of the active site. Residue F114 coordinates 5-amino-6-(D-ribitylamino)uracil. R128 provides a ligand contact to (2S)-2-hydroxy-3-oxobutyl phosphate.

Belongs to the DMRL synthase family. Forms an icosahedral capsid composed of 60 subunits, arranged as a dodecamer of pentamers.

The enzyme catalyses (2S)-2-hydroxy-3-oxobutyl phosphate + 5-amino-6-(D-ribitylamino)uracil = 6,7-dimethyl-8-(1-D-ribityl)lumazine + phosphate + 2 H2O + H(+). Its pathway is cofactor biosynthesis; riboflavin biosynthesis; riboflavin from 2-hydroxy-3-oxobutyl phosphate and 5-amino-6-(D-ribitylamino)uracil: step 1/2. Catalyzes the formation of 6,7-dimethyl-8-ribityllumazine by condensation of 5-amino-6-(D-ribitylamino)uracil with 3,4-dihydroxy-2-butanone 4-phosphate. This is the penultimate step in the biosynthesis of riboflavin. This is 6,7-dimethyl-8-ribityllumazine synthase from Shewanella frigidimarina (strain NCIMB 400).